The primary structure comprises 325 residues: Putative [LysW]-lysine/[LysW]-ornithine hydrolase (325 aa).

His-66 is a binding site for Zn(2+). Residue Asp-68 is part of the active site. Asp-90 lines the Zn(2+) pocket. Glu-117 functions as the Proton acceptor in the catalytic mechanism. Glu-118, Glu-139, and His-297 together coordinate Zn(2+).

Belongs to the peptidase M20A family. LysK subfamily. It depends on Zn(2+) as a cofactor. Co(2+) is required as a cofactor.

It localises to the cytoplasm. It carries out the reaction [amino-group carrier protein]-C-terminal-gamma-(L-lysyl)-L-glutamate + H2O = [amino-group carrier protein]-C-terminal-L-glutamate + L-lysine. It catalyses the reaction [amino-group carrier protein]-C-terminal-gamma-(L-ornithyl)-L-glutamate + H2O = [amino-group carrier protein]-C-terminal-L-glutamate + L-ornithine. Its pathway is amino-acid biosynthesis; L-lysine biosynthesis via AAA pathway; L-lysine from L-alpha-aminoadipate (Thermus route): step 5/5. It functions in the pathway amino-acid biosynthesis; L-arginine biosynthesis. Its function is as follows. Catalyzes the release of L-lysine from [LysW]-gamma-L-lysine and the release of L-ornithine from [LysW]-L-ornithine. This chain is Putative [LysW]-lysine/[LysW]-ornithine hydrolase, found in Pyrococcus horikoshii (strain ATCC 700860 / DSM 12428 / JCM 9974 / NBRC 100139 / OT-3).